Reading from the N-terminus, the 226-residue chain is Beta-casein (226 aa).

Residues 1–51 (REKEELNVSSETVESLSSNEPDSSSEESITHINKEKSQKFKHEGQQQREVE) form a disordered region. S9 carries the post-translational modification Phosphoserine. T12 carries the phosphothreonine modification. Phosphoserine occurs at positions 15, 17, 18, and 25. The segment covering 28 to 51 (SITHINKEKSQKFKHEGQQQREVE) has biased composition (basic and acidic residues).

Belongs to the beta-casein family. Post-translationally, there are at least three different forms found in milk, with varying degrees of phosphorylation. These include form 5-P which is phosphorylated at three sites, this form is present in low amounts, form 6-P which is phosphorylated at six sites, and form 7-P which is phosphorylated at seven sites. Mammary gland specific. Secreted in milk.

It localises to the secreted. Important role in determination of the surface properties of the casein micelles. The chain is Beta-casein from Equus asinus (Donkey).